The chain runs to 234 residues: Proteasome subunit alpha type-6 (234 aa).

Ser-14 carries the phosphoserine modification. Residue Lys-191 forms a Glycyl lysine isopeptide (Lys-Gly) (interchain with G-Cter in ubiquitin) linkage.

This sequence belongs to the peptidase T1A family. As to quaternary structure, the 26S proteasome consists of a 20S proteasome core and two 19S regulatory subunits. The 20S proteasome core is composed of 28 subunits that are arranged in four stacked rings, resulting in a barrel-shaped structure. The two end rings are each formed by seven alpha subunits, and the two central rings are each formed by seven beta subunits. The catalytic chamber with the active sites is on the inside of the barrel.

Its subcellular location is the cytoplasm. The protein resides in the nucleus. In terms of biological role, the proteasome degrades poly-ubiquitinated proteins in the cytoplasm and in the nucleus. It is essential for the regulated turnover of proteins and for the removal of misfolded proteins. The proteasome is a multicatalytic proteinase complex that is characterized by its ability to cleave peptides with Arg, Phe, Tyr, Leu, and Glu adjacent to the leaving group at neutral or slightly basic pH. It has an ATP-dependent proteolytic activity. The chain is Proteasome subunit alpha type-6 (PRE5) from Saccharomyces cerevisiae (strain ATCC 204508 / S288c) (Baker's yeast).